A 466-amino-acid chain; its full sequence is Argininosuccinate lyase (466 aa).

Positions 27, 114, and 159 each coordinate 2-(N(omega)-L-arginino)succinate. Histidine 160 serves as the catalytic Proton acceptor. The active-site Proton donor is the serine 281. The 2-(N(omega)-L-arginino)succinate site is built by asparagine 289, tyrosine 321, glutamine 326, and lysine 329.

It belongs to the lyase 1 family. Argininosuccinate lyase subfamily. In terms of assembly, homotetramer. In terms of processing, the N-terminus is blocked. In terms of tissue distribution, eye lens.

The enzyme catalyses 2-(N(omega)-L-arginino)succinate = fumarate + L-arginine. Its pathway is amino-acid biosynthesis; L-arginine biosynthesis; L-arginine from L-ornithine and carbamoyl phosphate: step 3/3. Delta crystallin, the principal crystallin in embryonic lens, is found only in birds and reptiles. This protein also functions as an enzymatically active argininosuccinate lyase, but it has a low activity. The chain is Argininosuccinate lyase (ASL) from Columba livia (Rock dove).